The primary structure comprises 310 residues: Melanocyte-stimulating hormone receptor (310 aa).

Over 1 to 37 (MPMQGAQRKLLGSLNSTPTATSNLGLAANRTGAPCLE) the chain is Extracellular. An N-linked (GlcNAc...) asparagine glycan is attached at N29. The helical transmembrane segment at 38-63 (LPIPDGLFLSLGLVSLVENVLVVAAI) threads the bilayer. Residues 64–72 (AKNRNLHSS) lie on the Cytoplasmic side of the membrane. A helical transmembrane segment spans residues 73–93 (MYCFICCLALSDLLVSGSNML). The Extracellular segment spans residues 94–110 (EAGVLATRASVVQQLHN). The helical transmembrane segment at 111 to 132 (TIDVLTCSSMLCSLCFLGAIAV) threads the bilayer. Over 133-155 (DRYISIFYALRYHSIMTLPRAQR) the chain is Cytoplasmic. A helical membrane pass occupies residues 156 to 175 (AVAAIWVASVLSSTLFITYY). Over 176 to 183 (DHAAVLLC) the chain is Extracellular. A helical membrane pass occupies residues 184-203 (LVVFFLAMLVLMAVLYVHML). Residues 204 to 232 (AWACQHAQGIIRLHKRQPPAHKGFGLRGA) are Cytoplasmic-facing. The helical transmembrane segment at 233-258 (ATLTILLGIFFLCWGPFFLRLTLVVF) threads the bilayer. At 259-271 (CPQHLTCNCIFKN) the chain is on the extracellular side. The helical transmembrane segment at 272 to 292 (FKVFLTLIICNTIIDPLIYAF) threads the bilayer. Topologically, residues 293-310 (RSQELRRTLKEVLGRGRW) are cytoplasmic.

The protein belongs to the G-protein coupled receptor 1 family. In terms of assembly, interacts with MGRN1, but does not undergo MGRN1-mediated ubiquitination; this interaction competes with GNAS-binding and thus inhibits agonist-induced cAMP production. Interacts with OPN3; the interaction results in a decrease in MC1R-mediated cAMP signaling and ultimately a decrease in melanin production in melanocytes.

Its subcellular location is the cell membrane. Functionally, receptor for MSH (alpha, beta and gamma) and ACTH. The activity of this receptor is mediated by G proteins which activate adenylate cyclase. Mediates melanogenesis, the production of eumelanin (black/brown) and phaeomelanin (red/yellow), via regulation of cAMP signaling in melanocytes. In Leontopithecus chrysomelas (Golden-headed lion tamarin), this protein is Melanocyte-stimulating hormone receptor (MC1R).